The following is a 211-amino-acid chain: Dual specificity phosphatase 29 (211 aa).

Residues 47–192 (HVNEVWPGIY…LRTLDIQLAI (146 aa)) form the Tyrosine-protein phosphatase domain. Substrate is bound at residue 136–143 (HCAMGRSR). The active-site Phosphocysteine intermediate is the cysteine 137.

It belongs to the protein-tyrosine phosphatase family. Non-receptor class dual specificity subfamily.

It is found in the cytoplasm. It localises to the nucleus. The catalysed reaction is O-phospho-L-tyrosyl-[protein] + H2O = L-tyrosyl-[protein] + phosphate. It catalyses the reaction O-phospho-L-seryl-[protein] + H2O = L-seryl-[protein] + phosphate. It carries out the reaction O-phospho-L-threonyl-[protein] + H2O = L-threonyl-[protein] + phosphate. Its function is as follows. Dual specificity phosphatase able to dephosphorylate phosphotyrosine, phosphoserine and phosphothreonine residues within the same substrate, with a preference for phosphotyrosine as a substrate. Involved in the modulation of AMPK and MAPK1/2 signaling pathways. This is Dual specificity phosphatase 29 (dusp29) from Callorhinchus milii (Ghost shark).